Consider the following 450-residue polypeptide: Phosphomethylpyrimidine synthase (450 aa).

Residues N80, M109, Y138, H173, 193 to 195 (SRG), 234 to 237 (DSLR), and E273 each bind substrate. H277 lines the Zn(2+) pocket. Y300 serves as a coordination point for substrate. H341 provides a ligand contact to Zn(2+). The [4Fe-4S] cluster site is built by C421, C424, and C429.

This sequence belongs to the ThiC family. As to quaternary structure, homodimer. [4Fe-4S] cluster is required as a cofactor.

It carries out the reaction 5-amino-1-(5-phospho-beta-D-ribosyl)imidazole + S-adenosyl-L-methionine = 4-amino-2-methyl-5-(phosphooxymethyl)pyrimidine + CO + 5'-deoxyadenosine + formate + L-methionine + 3 H(+). The protein operates within cofactor biosynthesis; thiamine diphosphate biosynthesis. Its function is as follows. Catalyzes the synthesis of the hydroxymethylpyrimidine phosphate (HMP-P) moiety of thiamine from aminoimidazole ribotide (AIR) in a radical S-adenosyl-L-methionine (SAM)-dependent reaction. The chain is Phosphomethylpyrimidine synthase from Campylobacter fetus subsp. fetus (strain 82-40).